The primary structure comprises 466 residues: Asparagine--tRNA ligase (466 aa).

Belongs to the class-II aminoacyl-tRNA synthetase family. Homodimer.

It is found in the cytoplasm. The enzyme catalyses tRNA(Asn) + L-asparagine + ATP = L-asparaginyl-tRNA(Asn) + AMP + diphosphate + H(+). This is Asparagine--tRNA ligase from Xylella fastidiosa (strain 9a5c).